A 143-amino-acid chain; its full sequence is Ribosome maturation factor RimP (143 aa).

This sequence belongs to the RimP family.

It is found in the cytoplasm. In terms of biological role, required for maturation of 30S ribosomal subunits. The protein is Ribosome maturation factor RimP of Neisseria meningitidis serogroup C (strain 053442).